A 364-amino-acid chain; its full sequence is Medium-wave-sensitive opsin 1 (364 aa).

Residues 1–24 (MAQRWDPQRLAGGQPQDSHEDSTQ) form a disordered region. The Extracellular portion of the chain corresponds to 1 to 52 (MAQRWDPQRLAGGQPQDSHEDSTQSSIFTYTNSNATRGPFEGPNYHIAPRWV). The required for 11-cis-retinal regeneration stretch occupies residues 17–43 (DSHEDSTQSSIFTYTNSNATRGPFEGP). N-linked (GlcNAc...) asparagine glycosylation is present at N34. A helical membrane pass occupies residues 53–77 (YHITSTWMIIVVIASVFTNGLVLVA). Residues 78–89 (TMKFKKLRHPLN) lie on the Cytoplasmic side of the membrane. Residues 90 to 115 (WILVNLAIADLAETVIASTISVVNQL) form a helical membrane-spanning segment. At 116–129 (YGYFVLGHPLCVVE) the chain is on the extracellular side. C126 and C203 form a disulfide bridge. Residues 130-149 (GYTVSVCGITGLWSLAIISW) traverse the membrane as a helical segment. The Cytoplasmic segment spans residues 150–168 (ERWLVVCKPFGNMRFDAKL). The chain crosses the membrane as a helical span at residues 169–192 (AIVGIAFSWIWSAVWTAPPIFGWS). Residues 193 to 218 (RYWPYGLKTSCGPDVFSGTSYPGVQS) are Extracellular-facing. Residues 219 to 246 (YMMVLMVTCCIIPLSIIILCYLQVWLAI) traverse the membrane as a helical segment. Residues 247–268 (RAVAKQQKESESTQKAEKEVTR) are Cytoplasmic-facing. Residues 269-292 (MVVVMVFAYCLCWGPYTFFACFAT) traverse the membrane as a helical segment. The Extracellular segment spans residues 293–300 (ANPGYAFH). A helical transmembrane segment spans residues 301–320 (PLVAALPAYFAKSATIYNPI). K312 bears the N6-(retinylidene)lysine mark. Residues 321–364 (IYVFMNRQFRNCILQLFGKKVDDTSELSSASKTEASSVSSVSPA) lie on the Cytoplasmic side of the membrane.

Belongs to the G-protein coupled receptor 1 family. Opsin subfamily. As to quaternary structure, monomer. Homodimer. Homotetramer. In terms of processing, O-glycosylated. Phosphorylated on some or all of the serine and threonine residues present in the C-terminal region. As to expression, expressed in cone photoreceptor cells.

The protein localises to the membrane. In terms of biological role, visual pigments are the light-absorbing molecules that mediate vision. They consist of an apoprotein, opsin, covalently linked to cis-retinal. May increase spectral sensitivity in dim light. In Sciurus carolinensis (Eastern gray squirrel), this protein is Medium-wave-sensitive opsin 1 (OPN1MW).